Consider the following 271-residue polypeptide: Regulatory protein RecX (271 aa).

The protein belongs to the RecX family.

The protein resides in the cytoplasm. Its function is as follows. Modulates RecA activity. In Lactobacillus johnsonii (strain CNCM I-12250 / La1 / NCC 533), this protein is Regulatory protein RecX.